Here is a 196-residue protein sequence, read N- to C-terminus: Holliday junction branch migration complex subunit RuvA (196 aa).

Positions 1–63 (MYDYIKGTLV…DDAHLLFGFH (63 aa)) are domain I. Residues 64–142 (TEDEKEVFLK…ELPAETTNTT (79 aa)) form a domain II region. Residues 143 to 146 (ANQT) form a flexible linker region. Residues 147-196 (AGNQQLDEAMEALLALGYKSTELKKVKAFFEDTNETAEQYIKSALKMLMK) form a domain III region.

The protein belongs to the RuvA family. As to quaternary structure, homotetramer. Forms an RuvA(8)-RuvB(12)-Holliday junction (HJ) complex. HJ DNA is sandwiched between 2 RuvA tetramers; dsDNA enters through RuvA and exits via RuvB. An RuvB hexamer assembles on each DNA strand where it exits the tetramer. Each RuvB hexamer is contacted by two RuvA subunits (via domain III) on 2 adjacent RuvB subunits; this complex drives branch migration. In the full resolvosome a probable DNA-RuvA(4)-RuvB(12)-RuvC(2) complex forms which resolves the HJ.

The protein localises to the cytoplasm. Its function is as follows. The RuvA-RuvB-RuvC complex processes Holliday junction (HJ) DNA during genetic recombination and DNA repair, while the RuvA-RuvB complex plays an important role in the rescue of blocked DNA replication forks via replication fork reversal (RFR). RuvA specifically binds to HJ cruciform DNA, conferring on it an open structure. The RuvB hexamer acts as an ATP-dependent pump, pulling dsDNA into and through the RuvAB complex. HJ branch migration allows RuvC to scan DNA until it finds its consensus sequence, where it cleaves and resolves the cruciform DNA. The sequence is that of Holliday junction branch migration complex subunit RuvA from Streptococcus thermophilus (strain CNRZ 1066).